The primary structure comprises 140 residues: L-fucose mutarotase (140 aa).

His-22 acts as the Proton donor in catalysis. Substrate-binding positions include Asp-30, Arg-107, and 129–131 (YGN).

The protein belongs to the RbsD / FucU family. FucU mutarotase subfamily. In terms of assembly, homodecamer.

The protein resides in the cytoplasm. The enzyme catalyses alpha-L-fucose = beta-L-fucose. Its pathway is carbohydrate metabolism; L-fucose metabolism. In terms of biological role, involved in the anomeric conversion of L-fucose. The protein is L-fucose mutarotase of Citrobacter koseri (strain ATCC BAA-895 / CDC 4225-83 / SGSC4696).